Consider the following 2290-residue polypeptide: Protein Ycf2 (2290 aa).

Residues 505–530 (GSNPTERSTRDQKSLKKQQDVSFVPP) are disordered. The span at 511–523 (RSTRDQKSLKKQQ) shows a compositional bias: basic and acidic residues. Residue 1639–1646 (GSIGTGRS) coordinates ATP.

It belongs to the Ycf2 family.

It is found in the plastid. The protein localises to the chloroplast stroma. In terms of biological role, probable ATPase of unknown function. Its presence in a non-photosynthetic plant (Epifagus virginiana) and experiments in tobacco indicate that it has an essential function which is probably not related to photosynthesis. The polypeptide is Protein Ycf2 (Ceratophyllum demersum (Rigid hornwort)).